The chain runs to 211 residues: Putative truncated flagellar export/assembly protein LafU (211 aa).

One can recognise an OmpA-like domain in the interval 58-176 (LRVLIKDDQN…RIEIMVLTKS (119 aa)).

It belongs to the MotB family.

In Escherichia coli (strain K12), this protein is Putative truncated flagellar export/assembly protein LafU.